The chain runs to 201 residues: 3-isopropylmalate dehydratase small subunit (201 aa).

This sequence belongs to the LeuD family. LeuD type 1 subfamily. In terms of assembly, heterodimer of LeuC and LeuD.

It carries out the reaction (2R,3S)-3-isopropylmalate = (2S)-2-isopropylmalate. Its pathway is amino-acid biosynthesis; L-leucine biosynthesis; L-leucine from 3-methyl-2-oxobutanoate: step 2/4. Functionally, catalyzes the isomerization between 2-isopropylmalate and 3-isopropylmalate, via the formation of 2-isopropylmaleate. The chain is 3-isopropylmalate dehydratase small subunit from Shewanella denitrificans (strain OS217 / ATCC BAA-1090 / DSM 15013).